The sequence spans 87 residues: Small ribosomal subunit protein bS16 (87 aa).

The protein belongs to the bacterial ribosomal protein bS16 family.

This chain is Small ribosomal subunit protein bS16, found in Ehrlichia ruminantium (strain Gardel).